Consider the following 20-residue polypeptide: Cruzioseptin-15 (20 aa).

Expressed by the skin glands.

Its subcellular location is the secreted. Has antimicrobial activity. The sequence is that of Cruzioseptin-15 from Cruziohyla calcarifer (Splendid leaf frog).